A 322-amino-acid chain; its full sequence is Undecaprenyl-phosphate 4-deoxy-4-formamido-L-arabinose transferase (322 aa).

The Cytoplasmic portion of the chain corresponds to 1-235 (MFEIHPVKKV…TCLTTTPLRM (235 aa)). The chain crosses the membrane as a helical span at residues 236 to 256 (LSLLGSIIAIGGFSIAVLLVI). Residues 257 to 269 (LRLTFGPQWAAEG) lie on the Periplasmic side of the membrane. The helical transmembrane segment at 270-290 (VFMLFAVLFTFIGAQFIGMGL) threads the bilayer. The Cytoplasmic segment spans residues 291–322 (LGEYIGRIYTDVRARPRYFVQQVIRPSSKENE).

This sequence belongs to the glycosyltransferase 2 family.

It is found in the cell inner membrane. The catalysed reaction is UDP-4-deoxy-4-formamido-beta-L-arabinose + di-trans,octa-cis-undecaprenyl phosphate = 4-deoxy-4-formamido-alpha-L-arabinopyranosyl di-trans,octa-cis-undecaprenyl phosphate + UDP. It functions in the pathway glycolipid biosynthesis; 4-amino-4-deoxy-alpha-L-arabinose undecaprenyl phosphate biosynthesis; 4-amino-4-deoxy-alpha-L-arabinose undecaprenyl phosphate from UDP-4-deoxy-4-formamido-beta-L-arabinose and undecaprenyl phosphate: step 1/2. Its pathway is bacterial outer membrane biogenesis; lipopolysaccharide biosynthesis. In terms of biological role, catalyzes the transfer of 4-deoxy-4-formamido-L-arabinose from UDP to undecaprenyl phosphate. The modified arabinose is attached to lipid A and is required for resistance to polymyxin and cationic antimicrobial peptides. The sequence is that of Undecaprenyl-phosphate 4-deoxy-4-formamido-L-arabinose transferase from Shigella dysenteriae serotype 1 (strain Sd197).